We begin with the raw amino-acid sequence, 42 residues long: MRDLKTYLSVAPVLSTLWFVALAGLLIEINRFFPDALTFPFF.

A helical transmembrane segment spans residues 7–27; it reads YLSVAPVLSTLWFVALAGLLI.

It belongs to the PsaJ family.

Its subcellular location is the plastid. It is found in the chloroplast thylakoid membrane. May help in the organization of the PsaE and PsaF subunits. The polypeptide is Photosystem I reaction center subunit IX (Atropa belladonna (Belladonna)).